Here is a 339-residue protein sequence, read N- to C-terminus: Biotin synthase (339 aa).

Residues 55 to 282 (NAVQLSTLLS…KAVVRLSAGR (228 aa)) form the Radical SAM core domain. [4Fe-4S] cluster contacts are provided by cysteine 70, cysteine 74, and cysteine 77. [2Fe-2S] cluster contacts are provided by cysteine 114, cysteine 145, cysteine 205, and arginine 277.

This sequence belongs to the radical SAM superfamily. Biotin synthase family. In terms of assembly, homodimer. [4Fe-4S] cluster serves as cofactor. [2Fe-2S] cluster is required as a cofactor.

The catalysed reaction is (4R,5S)-dethiobiotin + (sulfur carrier)-SH + 2 reduced [2Fe-2S]-[ferredoxin] + 2 S-adenosyl-L-methionine = (sulfur carrier)-H + biotin + 2 5'-deoxyadenosine + 2 L-methionine + 2 oxidized [2Fe-2S]-[ferredoxin]. Its pathway is cofactor biosynthesis; biotin biosynthesis; biotin from 7,8-diaminononanoate: step 2/2. In terms of biological role, catalyzes the conversion of dethiobiotin (DTB) to biotin by the insertion of a sulfur atom into dethiobiotin via a radical-based mechanism. The polypeptide is Biotin synthase (Burkholderia vietnamiensis (strain G4 / LMG 22486) (Burkholderia cepacia (strain R1808))).